The sequence spans 597 residues: MAEETRQSKLAAAKRKLKEYWQRNSPGVPAGAKRNRKTNGSIHETATSGGCHSPGDSSSTSSSLHAPQSPCQELAVVPDSRSVKVSQLKNTIKSLKQQKKQVEHQLEEEKKANNEKQKAERGLEVQIQRLNIQKGKLNTDLYHTKRSLRYFEEESKDLAVRLQHSLQRKGELERALSAVTATQKKKAERFSSRSKARMEWKLEQSMREQALLKAQLTQLKESLKEVQLERDEYAEHLKGERARWQQRMRKMSQEVCSLKKEKKHDKYRVETLERSLSKLKHQMAEPLPPEPPAVPSEVELQHLRKELERVAGALQAQVEYNQRISLLNEGQKERLREQEERLQEQQERLREQEERLQQLAEPQNSFKELNNENKSVLQLEQQVKELQEKLGKRLAHPVASAQKEPEAAVPAPGPGGESSGFMDHLEEKADLSELVEKEELGFFQYYRERCHQKVYHPITKPGGSAKDAAPGGGHHQAGPGQGGDEGEAAGAAGDGVAAGGDYKGHSKFLVTAQNPAHEPSPGAPAPQELGAAHKHGDLCEVSLTDSVEPVQGETREGSPHDKPTAQPIVQDHQEHPGLGSNCCVPFFCWAWPPRRRR.

Disordered regions lie at residues 1-80 (MAEE…VPDS) and 96-120 (KQQK…QKAE). The span at 38-50 (TNGSIHETATSGG) shows a compositional bias: polar residues. A compositionally biased stretch (low complexity) spans 53–70 (SPGDSSSTSSSLHAPQSP). 3 coiled-coil regions span residues 81 to 141 (RSVK…NTDL), 199 to 255 (EWKL…SQEV), and 296 to 394 (SEVE…GKRL). Positions 100–120 (KQVEHQLEEEKKANNEKQKAE) are enriched in basic and acidic residues. Disordered regions lie at residues 390–422 (LGKR…SGFM), 457–498 (PITK…GVAA), and 549–576 (PVQG…QEHP). Over residues 470-483 (PGGGHHQAGPGQGG) the composition is skewed to gly residues. Basic and acidic residues predominate over residues 553-563 (ETREGSPHDKP).

Belongs to the GOLGA8 family.

This chain is Golgin subfamily A member 8C (GOLGA8CP), found in Homo sapiens (Human).